Reading from the N-terminus, the 504-residue chain is One cut domain family member 2 (504 aa).

Disordered regions lie at residues 29–95 (LGTL…GTAA), 166–189 (KFHHPHPHHHPHHHHHHHHQRLSG), 274–332 (EQHL…QLEE), and 485–504 (WQDDLSTGGSSSTSSTCTKA). Residues 35-56 (PAGGGSGGGGGGGGGGGGGGPG) show a composition bias toward gly residues. The segment covering 168 to 186 (HHPHPHHHPHHHHHHHHQR) has biased composition (basic residues). The CUT DNA-binding region spans 324–410 (VATSGQLEEI…QRMSALRLAA (87 aa)). Residues 426 to 485 (QKKSRLVFTDLQRRTLFAIFKENKRPSKEMQITISQQLGLELTTVSNFFMNARRRSLEKW) constitute a DNA-binding region (homeobox). Residues 490 to 504 (STGGSSSTSSTCTKA) show a composition bias toward low complexity.

It belongs to the CUT homeobox family.

It is found in the nucleus. Transcriptional activator. Activates the transcription of a number of liver genes such as HNF3B. The chain is One cut domain family member 2 (ONECUT2) from Homo sapiens (Human).